The primary structure comprises 212 residues: Shuttling pre-60S factor ECM1 (212 aa).

Disordered stretches follow at residues 28–48 (KISK…EVKD) and 188–212 (SLAE…DVEE). Phosphoserine is present on Ser-188. Over residues 191-201 (EDNTVQKTPTN) the composition is skewed to polar residues.

This sequence belongs to the ECM1 family. As to quaternary structure, associates with the pre-60S ribosomal particle and the nucleopore complex.

The protein resides in the nucleus. It localises to the nucleolus. The protein localises to the cytoplasm. Pre-ribosomal factor involved in 60S ribosomal protein subunit export from the nucleus. This Saccharomyces cerevisiae (strain ATCC 204508 / S288c) (Baker's yeast) protein is Shuttling pre-60S factor ECM1 (ECM1).